Reading from the N-terminus, the 708-residue chain is Polyribonucleotide nucleotidyltransferase (708 aa).

The Mg(2+) site is built by aspartate 490 and aspartate 496. Residues 557 to 619 (PRIETMTIPK…KSIDDAIRLI (63 aa)) form the KH domain. One can recognise an S1 motif domain in the interval 629 to 699 (GEVYKGKVRS…KTGKFKLSRK (71 aa)).

It belongs to the polyribonucleotide nucleotidyltransferase family. The cofactor is Mg(2+).

It is found in the cytoplasm. The enzyme catalyses RNA(n+1) + phosphate = RNA(n) + a ribonucleoside 5'-diphosphate. Functionally, involved in mRNA degradation. Catalyzes the phosphorolysis of single-stranded polyribonucleotides processively in the 3'- to 5'-direction. The polypeptide is Polyribonucleotide nucleotidyltransferase (Bacteroides fragilis (strain ATCC 25285 / DSM 2151 / CCUG 4856 / JCM 11019 / LMG 10263 / NCTC 9343 / Onslow / VPI 2553 / EN-2)).